A 757-amino-acid chain; its full sequence is LPS-assembly protein LptD (757 aa).

The first 21 residues, 1–21 (MRRLIPIAITGSLLWGAAVQA), serve as a signal peptide directing secretion.

It belongs to the LptD family. As to quaternary structure, component of the lipopolysaccharide transport and assembly complex. Interacts with LptE and LptA.

It is found in the cell outer membrane. Functionally, together with LptE, is involved in the assembly of lipopolysaccharide (LPS) at the surface of the outer membrane. The polypeptide is LPS-assembly protein LptD (Alkalilimnicola ehrlichii (strain ATCC BAA-1101 / DSM 17681 / MLHE-1)).